Reading from the N-terminus, the 1105-residue chain is Serine/threonine-protein kinase Warts (1105 aa).

Positions 33–54 (VQNNHRNNQNYTPLRYTATNGR) are enriched in polar residues. 5 disordered regions span residues 33–81 (VQNN…APDV), 145–253 (CSPA…TQNG), 273–362 (GGGS…YQAR), 383–462 (QTAV…EPPS), and 514–643 (AQRE…RKEF). Positions 69–81 (MEPPPSASPAPDV) are enriched in pro residues. Residues 242 to 253 (QRGNSPVITQNG) are compositionally biased toward polar residues. Low complexity predominate over residues 307–320 (SMQSRQSPTQSQQS). Residues 325-343 (SPSSGIYSATSAGSPSPIT) show a composition bias toward polar residues. Low complexity-rich tracts occupy residues 387-400 (APQSPSSASASNSP) and 415-437 (AAVVQQQQQAAAAAHQQQHQHQQ). Residues 515-533 (QRERDQRERDQRERERDQQ) show a composition bias toward basic and acidic residues. Composition is skewed to low complexity over residues 551–576 (QSNNNNNSEIKPPSCNNNNIQISNSN) and 589–616 (NNNSSNTGANSSGGSNGSTGTTASSSTS). Positions 627–643 (PERKKISKEKEEERKEF) are enriched in basic and acidic residues. The Protein kinase domain maps to 719-1020 (FVKLKPIGVG…VDEVKSHDFF (302 aa)). ATP contacts are provided by residues 725–733 (IGVGAFGEV) and K749. The active-site Proton acceptor is the D843. Disordered stretches follow at residues 881–900 (GNHSRQDSMEPWEEYSENGP) and 1038–1070 (EIKHPTDTSNFDPVDPEKLRSNDSTMSSGDDVD). The AGC-kinase C-terminal domain maps to 1021 to 1091 (KGIDFADMRK…FTFRRFFDDK (71 aa)).

Belongs to the protein kinase superfamily. AGC Ser/Thr protein kinase family. In terms of assembly, interacts with yki. Interacts with jub. The cofactor is Mg(2+).

It localises to the cytoplasm. Its subcellular location is the cytosol. It is found in the cytoskeleton. The protein localises to the microtubule organizing center. The protein resides in the centrosome. The catalysed reaction is L-seryl-[protein] + ATP = O-phospho-L-seryl-[protein] + ADP + H(+). The enzyme catalyses L-threonyl-[protein] + ATP = O-phospho-L-threonyl-[protein] + ADP + H(+). Functionally, negative regulator of Yorkie (Yki) in the Hippo/SWH (Sav/Wts/Hpo) signaling pathway that plays a pivotal role in organ size control and tumor suppression by restricting proliferation and promoting apoptosis. The core of this pathway is composed of a kinase cascade wherein Hippo (Hpo), in complex with its regulatory protein Salvador (Sav), phosphorylates and activates Warts (Wts) in complex with its regulatory protein Mats, which in turn phosphorylates and inactivates the Yorkie (Yki) oncoprotein. The Hippo/SWH signaling pathway inhibits the activity of the transcriptional complex formed by Scalloped (sd) and Yki and the target genes of this pathway include cyclin-E (cycE), diap1 and bantam. Inhibits nuclear localization of Yki. Regulates salivary gland degradation in a PI3K-dependent manner and Yki- and Sd-independent, mechanism. The protein is Serine/threonine-protein kinase Warts (wts) of Drosophila melanogaster (Fruit fly).